The sequence spans 297 residues: Pyridoxal 5'-phosphate synthase subunit PdxS (297 aa).

Asp-27 contacts D-ribose 5-phosphate. The active-site Schiff-base intermediate with D-ribose 5-phosphate is Lys-84. Gly-156 lines the D-ribose 5-phosphate pocket. Arg-168 contributes to the D-glyceraldehyde 3-phosphate binding site. D-ribose 5-phosphate-binding positions include Gly-217 and 238-239 (GS).

The protein belongs to the PdxS/SNZ family. As to quaternary structure, in the presence of PdxT, forms a dodecamer of heterodimers.

It catalyses the reaction aldehydo-D-ribose 5-phosphate + D-glyceraldehyde 3-phosphate + L-glutamine = pyridoxal 5'-phosphate + L-glutamate + phosphate + 3 H2O + H(+). It participates in cofactor biosynthesis; pyridoxal 5'-phosphate biosynthesis. Functionally, catalyzes the formation of pyridoxal 5'-phosphate from ribose 5-phosphate (RBP), glyceraldehyde 3-phosphate (G3P) and ammonia. The ammonia is provided by the PdxT subunit. Can also use ribulose 5-phosphate and dihydroxyacetone phosphate as substrates, resulting from enzyme-catalyzed isomerization of RBP and G3P, respectively. In Corynebacterium efficiens (strain DSM 44549 / YS-314 / AJ 12310 / JCM 11189 / NBRC 100395), this protein is Pyridoxal 5'-phosphate synthase subunit PdxS.